The sequence spans 376 residues: Probable dual-specificity RNA methyltransferase RlmN (376 aa).

Residues 1 to 25 are disordered; that stretch reads MSDSERTSLPLVFDEPRGRKKPPRH. Glutamate 113 (proton acceptor) is an active-site residue. Residues 119–362 enclose the Radical SAM core domain; it reads YPDRATMCVS…PTTVRDTRGR (244 aa). Cysteine 126 and cysteine 368 form a disulfide bridge. [4Fe-4S] cluster-binding residues include cysteine 133, cysteine 137, and cysteine 140. Residues 188-189, serine 222, 245-247, and asparagine 325 each bind S-adenosyl-L-methionine; these read GE and SLH. The active-site S-methylcysteine intermediate is the cysteine 368.

The protein belongs to the radical SAM superfamily. RlmN family. It depends on [4Fe-4S] cluster as a cofactor.

The protein localises to the cytoplasm. It carries out the reaction adenosine(2503) in 23S rRNA + 2 reduced [2Fe-2S]-[ferredoxin] + 2 S-adenosyl-L-methionine = 2-methyladenosine(2503) in 23S rRNA + 5'-deoxyadenosine + L-methionine + 2 oxidized [2Fe-2S]-[ferredoxin] + S-adenosyl-L-homocysteine. The catalysed reaction is adenosine(37) in tRNA + 2 reduced [2Fe-2S]-[ferredoxin] + 2 S-adenosyl-L-methionine = 2-methyladenosine(37) in tRNA + 5'-deoxyadenosine + L-methionine + 2 oxidized [2Fe-2S]-[ferredoxin] + S-adenosyl-L-homocysteine. Functionally, specifically methylates position 2 of adenine 2503 in 23S rRNA and position 2 of adenine 37 in tRNAs. This Nocardioides sp. (strain ATCC BAA-499 / JS614) protein is Probable dual-specificity RNA methyltransferase RlmN.